A 73-amino-acid chain; its full sequence is uncharacterized protein (73 aa).

In terms of domain architecture, HTH deoR-type spans M8 to E63. A DNA-binding region (H-T-H motif) is located at residues V25–D44.

This is an uncharacterized protein from Bacillus subtilis (strain 168).